The primary structure comprises 172 residues: MVDKRESYTKEDLLASSRGELFGPQGPQLPAPNMLMMDRVVKMTEDGGKYGKGFVEAELDITPDQWFFGCHFIGDPVMPGCLGLDAMWQLVGFYLGWLGGEGKGRALGVGEVKFSGQVLPTAKKVTYRIHFKRVINRRLVMGIADGEVLVDGQHIYAADELKVGLFKDASSF.

The active site involves His71.

The protein belongs to the thioester dehydratase family. FabA subfamily. In terms of assembly, homodimer.

The protein resides in the cytoplasm. It carries out the reaction a (3R)-hydroxyacyl-[ACP] = a (2E)-enoyl-[ACP] + H2O. It catalyses the reaction (3R)-hydroxydecanoyl-[ACP] = (2E)-decenoyl-[ACP] + H2O. The catalysed reaction is (2E)-decenoyl-[ACP] = (3Z)-decenoyl-[ACP]. The protein operates within lipid metabolism; fatty acid biosynthesis. Necessary for the introduction of cis unsaturation into fatty acids. Catalyzes the dehydration of (3R)-3-hydroxydecanoyl-ACP to E-(2)-decenoyl-ACP and then its isomerization to Z-(3)-decenoyl-ACP. Can catalyze the dehydratase reaction for beta-hydroxyacyl-ACPs with saturated chain lengths up to 16:0, being most active on intermediate chain length. The sequence is that of 3-hydroxydecanoyl-[acyl-carrier-protein] dehydratase from Pectobacterium atrosepticum (strain SCRI 1043 / ATCC BAA-672) (Erwinia carotovora subsp. atroseptica).